Reading from the N-terminus, the 397-residue chain is Elongation factor Tu 1 (397 aa).

The region spanning 10-206 (KPHVNIGTIG…AIDTWIPEPV (197 aa)) is the tr-type G domain. The interval 19-26 (GHVDHGKT) is G1. 19–26 (GHVDHGKT) contributes to the GTP binding site. Position 26 (Thr26) interacts with Mg(2+). Residues 61 to 65 (GITIS) are G2. Residues 82–85 (DCPG) form a G3 region. Residues 82–86 (DCPGH) and 137–140 (NKCD) contribute to the GTP site. Residues 137-140 (NKCD) are G4. The segment at 175 to 177 (SAL) is G5.

This sequence belongs to the TRAFAC class translation factor GTPase superfamily. Classic translation factor GTPase family. EF-Tu/EF-1A subfamily. As to quaternary structure, monomer.

The protein localises to the cytoplasm. It carries out the reaction GTP + H2O = GDP + phosphate + H(+). GTP hydrolase that promotes the GTP-dependent binding of aminoacyl-tRNA to the A-site of ribosomes during protein biosynthesis. This chain is Elongation factor Tu 1, found in Alkaliphilus metalliredigens (strain QYMF).